The primary structure comprises 255 residues: 5'-nucleotidase SurE (255 aa).

Positions 16, 17, 47, and 100 each coordinate a divalent metal cation.

Belongs to the SurE nucleotidase family. The cofactor is a divalent metal cation.

Its subcellular location is the cytoplasm. The enzyme catalyses a ribonucleoside 5'-phosphate + H2O = a ribonucleoside + phosphate. In terms of biological role, nucleotidase that shows phosphatase activity on nucleoside 5'-monophosphates. The chain is 5'-nucleotidase SurE from Vibrio vulnificus (strain CMCP6).